A 432-amino-acid polypeptide reads, in one-letter code: Probable exopolygalacturonase X (432 aa).

The N-terminal stretch at methionine 1–glycine 23 is a signal peptide. Residues asparagine 113, asparagine 129, and asparagine 199 are each glycosylated (N-linked (GlcNAc...) asparagine). A PbH1 1 repeat occupies serine 231–proline 252. The active-site Proton donor is aspartate 245. An intrachain disulfide couples cysteine 247 to cysteine 264. N-linked (GlcNAc...) asparagine glycosylation is found at asparagine 253 and asparagine 265. PbH1 repeat units lie at residues serine 254 to serine 274, valine 285 to valine 306, and valine 327 to glutamine 348. Histidine 268 is an active-site residue. N-linked (GlcNAc...) asparagine glycosylation is found at asparagine 292, asparagine 297, asparagine 329, asparagine 354, and asparagine 364. The stretch at proline 362–serine 394 is one PbH1 5 repeat. Cysteines 392 and 398 form a disulfide.

Belongs to the glycosyl hydrolase 28 family.

It localises to the secreted. It carries out the reaction [(1-&gt;4)-alpha-D-galacturonosyl](n) + H2O = alpha-D-galacturonate + [(1-&gt;4)-alpha-D-galacturonosyl](n-1). Specific in hydrolyzing the terminal glycosidic bond of polygalacturonic acid and oligogalacturonates. This Neosartorya fischeri (strain ATCC 1020 / DSM 3700 / CBS 544.65 / FGSC A1164 / JCM 1740 / NRRL 181 / WB 181) (Aspergillus fischerianus) protein is Probable exopolygalacturonase X (pgaX).